The following is a 430-amino-acid chain: ATP-dependent protease ATPase subunit HslU (430 aa).

ATP-binding positions include Val18, 60 to 65 (GVGKTE), Asp243, Glu308, and Arg380.

The protein belongs to the ClpX chaperone family. HslU subfamily. A double ring-shaped homohexamer of HslV is capped on each side by a ring-shaped HslU homohexamer. The assembly of the HslU/HslV complex is dependent on binding of ATP.

It is found in the cytoplasm. Functionally, ATPase subunit of a proteasome-like degradation complex; this subunit has chaperone activity. The binding of ATP and its subsequent hydrolysis by HslU are essential for unfolding of protein substrates subsequently hydrolyzed by HslV. HslU recognizes the N-terminal part of its protein substrates and unfolds these before they are guided to HslV for hydrolysis. The sequence is that of ATP-dependent protease ATPase subunit HslU from Caulobacter vibrioides (strain ATCC 19089 / CIP 103742 / CB 15) (Caulobacter crescentus).